The primary structure comprises 1232 residues: uncharacterized protein (1232 aa).

Belongs to the Mg-chelatase subunit H family.

This is an uncharacterized protein from Methanocaldococcus jannaschii (strain ATCC 43067 / DSM 2661 / JAL-1 / JCM 10045 / NBRC 100440) (Methanococcus jannaschii).